The sequence spans 182 residues: UPF0301 protein NMCC_1249 (182 aa).

Belongs to the UPF0301 (AlgH) family.

This chain is UPF0301 protein NMCC_1249, found in Neisseria meningitidis serogroup C (strain 053442).